We begin with the raw amino-acid sequence, 788 residues long: Ribonucleoside-diphosphate reductase large subunit (788 aa).

An ATP-cone domain is found at 7–98 (TYVVKRDGRK…VSNLHKKTNK (92 aa)). ATP is bound by residues 11 to 12 (KR), 17 to 23 (EDVHFDK), Thr59, and Asp63. Ser208 and Ser223 together coordinate GDP. Cys224 and Cys450 form a disulfide bridge. Residues 232–234 (DSI), Lys249, Arg262, and 269–270 (AG) contribute to the dTTP site. Asn433 provides a ligand contact to GDP. Catalysis depends on Asn433, which acts as the Proton acceptor. The Cysteine radical intermediate role is filled by Cys435. GDP is bound by residues Glu437 and 610-613 (TAST). The active-site Proton acceptor is Glu437.

The protein belongs to the ribonucleoside diphosphate reductase large chain family. Heterodimer of a large and a small subunit.

The enzyme catalyses a 2'-deoxyribonucleoside 5'-diphosphate + [thioredoxin]-disulfide + H2O = a ribonucleoside 5'-diphosphate + [thioredoxin]-dithiol. With respect to regulation, under complex allosteric control mediated by deoxynucleoside triphosphates and ATP binding to separate specificity and activation sites on the large subunit. The type of nucleotide bound at the specificity site determines substrate preference. It seems probable that ATP makes the enzyme reduce CDP and UDP, dGTP favors ADP reduction and dTTP favors GDP reduction. Stimulated by ATP and inhibited by dATP binding to the activity site. Provides the precursors necessary for DNA synthesis. Catalyzes the biosynthesis of deoxyribonucleotides from the corresponding ribonucleotides. In Caenorhabditis elegans, this protein is Ribonucleoside-diphosphate reductase large subunit (rnr-1).